The following is a 45-amino-acid chain: Globin, minor monomeric component (45 aa).

Positions 1–45 (GLSAAERQVVASCWKDIAGADXGAGVGKEXLIKFISAAPEMAAVF) constitute a Globin domain.

Belongs to the globin family. In terms of assembly, monomer.

The sequence is that of Globin, minor monomeric component from Glycera dibranchiata (Bloodworm).